The following is a 93-amino-acid chain: Small ribosomal subunit protein uS19 (93 aa).

Belongs to the universal ribosomal protein uS19 family.

Protein S19 forms a complex with S13 that binds strongly to the 16S ribosomal RNA. The chain is Small ribosomal subunit protein uS19 from Lawsonia intracellularis (strain PHE/MN1-00).